Here is a 444-residue protein sequence, read N- to C-terminus: Tol-Pal system protein TolB (444 aa).

A signal peptide spans 1–19 (MRNIIYFILSLLFSVTSYA).

It belongs to the TolB family. In terms of assembly, the Tol-Pal system is composed of five core proteins: the inner membrane proteins TolA, TolQ and TolR, the periplasmic protein TolB and the outer membrane protein Pal. They form a network linking the inner and outer membranes and the peptidoglycan layer.

It localises to the periplasm. Functionally, part of the Tol-Pal system, which plays a role in outer membrane invagination during cell division and is important for maintaining outer membrane integrity. This chain is Tol-Pal system protein TolB, found in Rickettsia conorii (strain ATCC VR-613 / Malish 7).